The following is a 266-amino-acid chain: Undecaprenyl-diphosphatase (266 aa).

A run of 8 helical transmembrane segments spans residues 1 to 21, 39 to 59, 87 to 107, 117 to 137, 153 to 173, 189 to 209, 216 to 236, and 246 to 266; these read MEFF…FIPI, PGSS…FWYF, IFIG…FVPG, LSIA…DIST, YIGI…GATI, FSFL…FFSA, FPFL…LLAI, and HGLK…LFNL.

It belongs to the UppP family.

It localises to the cell inner membrane. The catalysed reaction is di-trans,octa-cis-undecaprenyl diphosphate + H2O = di-trans,octa-cis-undecaprenyl phosphate + phosphate + H(+). Its function is as follows. Catalyzes the dephosphorylation of undecaprenyl diphosphate (UPP). Confers resistance to bacitracin. The protein is Undecaprenyl-diphosphatase of Prochlorococcus marinus subsp. pastoris (strain CCMP1986 / NIES-2087 / MED4).